The chain runs to 1125 residues: Telomerase reverse transcriptase (1125 aa).

The tract at residues 1 to 239 (MPRAPRCPAV…TKRLLSLTST (239 aa)) is RNA-interacting domain 1. The GQ motif stretch occupies residues 58-205 (VPWGSQPPPA…RPVGGNFTNL (148 aa)). The required for regulating specificity for telomeric DNA and for processivity for primer elongation stretch occupies residues 137-141 (WMLLL). Residues 206–216 (GSAHQIKNSGH) are compositionally biased toward polar residues. The tract at residues 206-304 (GSAHQIKNSG…ASDPSLSGSV (99 aa)) is disordered. The linker stretch occupies residues 240–328 (NVPSAKKARF…PPQDAEKLRP (89 aa)). Basic and acidic residues predominate over residues 247–259 (ARFEPALRVDKGP). Low complexity predominate over residues 273–287 (APSPAASPKVPPAAK). A required for oligomerization region spans residues 306-528 (CKHKPSSSSL…VPAAEHRLRE (223 aa)). The interval 329-540 (FTETRHFLYS…LAMFLFWLMD (212 aa)) is RNA-interacting domain 2. A TFLY; involved in RNA binding motif is present at residues 332 to 337 (TRHFLY). The segment at 381–511 (FCRTRRLPRR…VKVEDCHWLR (131 aa)) is QFP motif. Residues 402-422 (LMNHAKCQYVRFLRSHCRFRT) are CP motif. Ser-447 bears the Phosphoserine; by DYRK2 mark. In terms of domain architecture, Reverse transcriptase spans 595–928 (EVKHHQDTWL…CLFPWCGLLL (334 aa)). Phosphotyrosine; by SRC-type Tyr-kinases is present on Tyr-697. The Mg(2+) site is built by Asp-702, Asp-861, and Asp-862. The interval 907–921 (LGGAAPHQLPAHCLF) is required for oligomerization. The primer grip sequence stretch occupies residues 923 to 927 (WCGLL). Residues 929–1125 (DTRTLEVFCD…LSTDFQTILD (197 aa)) form a CTE region.

Belongs to the reverse transcriptase family. Telomerase subfamily. As to quaternary structure, catalytic component of the telomerase holoenzyme complex composed of one molecule of TERT, one molecule of WRAP53/TCAB1, two molecules of H/ACA ribonucleoprotein complex subunits DKC1, NOP10, NHP2 and GAR1, and a telomerase RNA template component (TERC). The telomerase holoenzyme complex is associated with TEP1, SMG6/EST1A and POT1. The molecular chaperone HSP90/P23 complex is required for correct assembly and stabilization of the active telomerase. Interacts directly with HSP90A and PTGES3. Interacts with HSPA1A; the interaction occurs in the absence of TERC and dissociates once the complex has formed. Interacts with RAN; the interaction promotes nuclear export of TERT. Interacts with XPO1. Interacts with PTPN11; the interaction retains TERT in the nucleus. Interacts with NCL (via RRM1 and C-terminal RRM4/Arg/Gly-rich domains); the interaction is important for nucleolar localization of TERT. Interacts with SMARCA4 (via the bromodomain); the interaction regulates Wnt-mediated signaling. Interacts with MCRS1 (isoform MCRS2); the interaction inhibits in vitro telomerase activity. Interacts with PIF1; the interaction has no effect on the elongation activity of TERT. Interacts with PML; the interaction recruits TERT to PML bodies and inhibits telomerase activity. Interacts with GNL3L. Interacts with isoform 1 and isoform 2 of NVL. Interacts with DHX36. Interacts with ATF7. Phosphorylation at Tyr-697 under oxidative stress leads to translocation of TERT to the cytoplasm and reduces its antiapoptotic activity. Dephosphorylated by SHP2/PTPN11 leading to nuclear retention. Phosphorylation at the G2/M phase at Ser-447 by DYRK2 promotes ubiquitination by the EDVP complex and degradation. Post-translationally, ubiquitinated by the EDVP complex, a E3 ligase complex following phosphorylation at Ser-447 by DYRK2. Ubiquitinated leads to proteasomal degradation. In terms of tissue distribution, isoform 1 and isoform 2 expressed in thymus, liver, spleen, lung, kidney and testis. High level of inactive isoform 3 in adult hippocampus, low level in heart, cortex and cerebellum.

It localises to the nucleus. It is found in the nucleolus. Its subcellular location is the nucleoplasm. The protein localises to the chromosome. The protein resides in the telomere. It localises to the cytoplasm. It is found in the PML body. It carries out the reaction DNA(n) + a 2'-deoxyribonucleoside 5'-triphosphate = DNA(n+1) + diphosphate. Its function is as follows. Telomerase is a ribonucleoprotein enzyme essential for the replication of chromosome termini in most eukaryotes. Active in progenitor and cancer cells. Inactive, or very low activity, in normal somatic cells. Catalytic component of the teleromerase holoenzyme complex whose main activity is the elongation of telomeres by acting as a reverse transcriptase that adds simple sequence repeats to chromosome ends by copying a template sequence within the RNA component of the enzyme. Catalyzes the RNA-dependent extension of 3'-chromosomal termini with the 6-nucleotide telomeric repeat unit, 5'-TTAGGG-3'. The catalytic cycle involves primer binding, primer extension and release of product once the template boundary has been reached or nascent product translocation followed by further extension. More active on substrates containing 2 or 3 telomeric repeats. Telomerase activity is regulated by a number of factors including telomerase complex-associated proteins, chaperones and polypeptide modifiers. Modulates Wnt signaling. Plays important roles in aging and antiapoptosis. In Rattus norvegicus (Rat), this protein is Telomerase reverse transcriptase.